The sequence spans 284 residues: Probable sulfate transport system permease protein cysT (284 aa).

7 helical membrane passes run 25 to 45 (AWALTLMYMLVSLILPIGALL), 75 to 95 (SALIAALLNGVFGLLIAWVLV), 107 to 127 (AAVDLPFALPTSVAGLTLATV), 145 to 165 (VAFTRLGVMLAMLFVSFPFVV), 194 to 214 (FLRVLCPPLMPAMMTGIALAF), 223 to 243 (SVVIVSGNIPFQDLIAPVLIF), and 255 to 275 (TVIGTVVLLISLTLLLAINWI). Residues 69-272 (YAVTLSSALI…LISLTLLLAI (204 aa)) form the ABC transmembrane type-1 domain.

Belongs to the binding-protein-dependent transport system permease family. CysTW subfamily.

It is found in the plastid. The protein localises to the chloroplast membrane. In terms of biological role, part of the ABC transporter complex cysAWTP (TC 3.A.1.6.1) involved in sulfate/thiosulfate import. Probably responsible for the translocation of the substrate across the membrane. The polypeptide is Probable sulfate transport system permease protein cysT (cysT) (Nephroselmis olivacea (Green alga)).